The sequence spans 732 residues: 1,4-alpha-glucan branching enzyme GlgB 1 (732 aa).

Asp411 serves as the catalytic Nucleophile. The Proton donor role is filled by Glu464.

This sequence belongs to the glycosyl hydrolase 13 family. GlgB subfamily. As to quaternary structure, monomer.

The catalysed reaction is Transfers a segment of a (1-&gt;4)-alpha-D-glucan chain to a primary hydroxy group in a similar glucan chain.. The protein operates within glycan biosynthesis; glycogen biosynthesis. Its function is as follows. Catalyzes the formation of the alpha-1,6-glucosidic linkages in glycogen by scission of a 1,4-alpha-linked oligosaccharide from growing alpha-1,4-glucan chains and the subsequent attachment of the oligosaccharide to the alpha-1,6 position. This is 1,4-alpha-glucan branching enzyme GlgB 1 from Xanthomonas oryzae pv. oryzae (strain KACC10331 / KXO85).